The sequence spans 437 residues: Protein arginine methyltransferase NDUFAF7 homolog, mitochondrial (437 aa).

Residues 21 to 49 (RPNLGATGTPKMEPPKEQPEASSKAESGH) are disordered.

The protein belongs to the NDUFAF7 family.

The protein localises to the mitochondrion. It catalyses the reaction L-arginyl-[protein] + 2 S-adenosyl-L-methionine = N(omega),N(omega)'-dimethyl-L-arginyl-[protein] + 2 S-adenosyl-L-homocysteine + 2 H(+). Functionally, arginine methyltransferase involved in the assembly or stability of mitochondrial NADH:ubiquinone oxidoreductase complex (complex I). This Drosophila melanogaster (Fruit fly) protein is Protein arginine methyltransferase NDUFAF7 homolog, mitochondrial.